The chain runs to 149 residues: NADH-ubiquinone oxidoreductase chain 6 (149 aa).

Helical transmembrane passes span 23 to 43 (ILML…FYFI), 51 to 71 (MMMI…MISL), 83 to 103 (LSVT…MTKL), and 114 to 134 (VNFV…LTII).

The protein belongs to the complex I subunit 6 family.

It localises to the mitochondrion membrane. The catalysed reaction is a ubiquinone + NADH + 5 H(+)(in) = a ubiquinol + NAD(+) + 4 H(+)(out). Functionally, core subunit of the mitochondrial membrane respiratory chain NADH dehydrogenase (Complex I) that is believed to belong to the minimal assembly required for catalysis. Complex I functions in the transfer of electrons from NADH to the respiratory chain. The immediate electron acceptor for the enzyme is believed to be ubiquinone. This is NADH-ubiquinone oxidoreductase chain 6 (ND6) from Rhipicephalus sanguineus (Brown dog tick).